The following is a 526-amino-acid chain: Cholesterol side-chain cleavage enzyme, mitochondrial (526 aa).

Residues 1–36 constitute a mitochondrion transit peptide; it reads MLAKGLCLRSVLVKSCQPFLSPVWQGPGLATGNGAG. Cys-459 lines the heme pocket.

It belongs to the cytochrome P450 family. As to quaternary structure, interacts with FDX1/adrenodoxin. Heme is required as a cofactor. As to expression, expressed in the kidney where it localizes to the distal convoluted tubule and the thick ascending limb of the loop of Henle (at protein level). In the ovary, highly expressed in interstitial cells (at protein level). Also expressed in adrenal gland and testis.

The protein localises to the mitochondrion inner membrane. The catalysed reaction is 6 reduced [adrenodoxin] + cholesterol + 3 O2 + 6 H(+) = 4-methylpentanal + pregnenolone + 6 oxidized [adrenodoxin] + 4 H2O. It carries out the reaction 2 reduced [adrenodoxin] + cholesterol + O2 + 2 H(+) = (22R)-hydroxycholesterol + 2 oxidized [adrenodoxin] + H2O. It catalyses the reaction (22R)-hydroxycholesterol + 2 reduced [adrenodoxin] + O2 + 2 H(+) = (20R,22R)-20,22-dihydroxycholesterol + 2 oxidized [adrenodoxin] + H2O. The enzyme catalyses (20R,22R)-20,22-dihydroxycholesterol + 2 reduced [adrenodoxin] + O2 + 2 H(+) = 4-methylpentanal + pregnenolone + 2 oxidized [adrenodoxin] + 2 H2O. It participates in lipid metabolism; C21-steroid hormone metabolism. The protein operates within steroid metabolism; cholesterol metabolism. Its function is as follows. A cytochrome P450 monooxygenase that catalyzes the side-chain hydroxylation and cleavage of cholesterol to pregnenolone, the precursor of most steroid hormones. Catalyzes three sequential oxidation reactions of cholesterol, namely the hydroxylation at C22 followed with the hydroxylation at C20 to yield 20R,22R-hydroxycholesterol that is further cleaved between C20 and C22 to yield the C21-steroid pregnenolone and 4-methylpentanal. Mechanistically, uses molecular oxygen inserting one oxygen atom into a substrate and reducing the second into a water molecule. Two electrons are provided by NADPH via a two-protein mitochondrial transfer system comprising flavoprotein FDXR (adrenodoxin/ferredoxin reductase) and nonheme iron-sulfur protein FDX1 or FDX2 (adrenodoxin/ferredoxin). The protein is Cholesterol side-chain cleavage enzyme, mitochondrial of Rattus norvegicus (Rat).